A 316-amino-acid polypeptide reads, in one-letter code: Ribosomal RNA small subunit methyltransferase H (316 aa).

Residues 37 to 39, Asp-56, Phe-83, Asp-106, and His-113 contribute to the S-adenosyl-L-methionine site; that span reads GGH. Residues 276 to 316 form a disordered region; sequence PILPSEEETKENPASRSAKLRVLRKTKSADKKYKKENSKEE. Positions 302–316 are enriched in basic and acidic residues; the sequence is KSADKKYKKENSKEE.

The protein belongs to the methyltransferase superfamily. RsmH family.

The protein resides in the cytoplasm. The catalysed reaction is cytidine(1402) in 16S rRNA + S-adenosyl-L-methionine = N(4)-methylcytidine(1402) in 16S rRNA + S-adenosyl-L-homocysteine + H(+). Specifically methylates the N4 position of cytidine in position 1402 (C1402) of 16S rRNA. In Leptospira borgpetersenii serovar Hardjo-bovis (strain JB197), this protein is Ribosomal RNA small subunit methyltransferase H.